The chain runs to 422 residues: Steroid hormone receptor ERR1 (422 aa).

The tract at residues 1-66 is disordered; that stretch reads MSSQVVGIEP…EGAGSGEQGS (66 aa). The repressor domain stretch occupies residues 1 to 76; that stretch reads MSSQVVGIEP…GKLVLSSLPK (76 aa). A Glycyl lysine isopeptide (Lys-Gly) (interchain with G-Cter in SUMO) cross-link involves residue Lys14. Ser19 and Ser22 each carry phosphoserine. Positions 76 to 151 form a DNA-binding region, nuclear receptor; sequence KRLCLVCGDV…VGMLKEGVRL (76 aa). 2 NR C4-type zinc fingers span residues 79–99 and 115–134; these read CLVC…CEAC and CPAS…CQAC. N6-acetyllysine; by PCAF/KAT2B is present on residues Lys129, Lys138, Lys160, and Lys162. Residue Lys189 forms a Glycyl lysine isopeptide (Lys-Gly) (interchain with G-Cter in SUMO2) linkage. The NR LBD domain occupies 192–420; sequence PVNALVSHLL…KLFLEMLEAM (229 aa). Lys402 is covalently cross-linked (Glycyl lysine isopeptide (Lys-Gly) (interchain with G-Cter in SUMO); alternate). Lys402 participates in a covalent cross-link: Glycyl lysine isopeptide (Lys-Gly) (interchain with G-Cter in SUMO2); alternate. The tract at residues 402 to 422 is AF-2 domain; it reads KLEGKVPMHKLFLEMLEAMMD.

The protein belongs to the nuclear hormone receptor family. NR3 subfamily. Binds DNA as a monomer or a homodimer. Interacts (via the AF2 domain) with coactivator PPARGC1A (via the L3 motif); the interaction greatly enhances transcriptional activity of genes involved in energy metabolism. Interacts with PIAS4; the interaction enhances sumoylation. Interacts with MAPK15; promotes re-localization of ESRRA to the cytoplasm through a XPO1-dependent mechanism then inhibits ESRRA transcriptional activity. Phosphorylation on Ser-19 enhances sumoylation on Lys-14 increasing repression of transcriptional activity. Post-translationally, sumoylated with SUMO2. Main site is Lys-14 which is enhanced by phosphorylation on Ser-19, cofactor activation, and by interaction with PIAS4. Sumoylation enhances repression of transcriptional activity, but has no effect on subcellular location nor on DNA binding. In terms of processing, reversibly acetylated. Acetylation by PCAF/KAT2 at Lys-129, Lys-138, Lys-160 and Lys-162 and PCAF/KAT2 decreases transcriptional activity probably by inhibiting DNA-binding activity; deacetylation involves SIRT1 and HDAC8 and increases DNA-binding. In terms of tissue distribution, most highly expressed in kidney, heart, and brown adipocytes. Also found in uterus, cervix and vagina.

The protein resides in the nucleus. It is found in the cytoplasm. Functionally, binds to an ERR-alpha response element (ERRE) containing a single consensus half-site, 5'-TNAAGGTCA-3'. Can bind to the medium-chain acyl coenzyme A dehydrogenase (MCAD) response element NRRE-1 and may act as an important regulator of MCAD promoter. Binds to the C1 region of the lactoferrin gene promoter. Requires dimerization and the coactivator, PGC-1A, for full activity. The ERRalpha/PGC1alpha complex is a regulator of energy metabolism. Induces the expression of PERM1 in the skeletal muscle. The polypeptide is Steroid hormone receptor ERR1 (Esrra) (Mus musculus (Mouse)).